The following is a 471-amino-acid chain: Cell division protein FtsP (471 aa).

Positions 1-27 form a signal peptide, tat-type signal; sequence MSLNRRQFIQASGLALCAGMTPLAAKA. The region spanning 229 to 287 is the Plastocyanin-like domain; it reads VRLRLLNASNSRRYVMRLSDGRAMNVIASDQGLLPAPMAVNQLSLAPGERREILIDMSQ.

The protein belongs to the FtsP family. In terms of processing, predicted to be exported by the Tat system. The position of the signal peptide cleavage has not been experimentally proven.

It is found in the periplasm. Its function is as follows. Cell division protein that is required for growth during stress conditions. May be involved in protecting or stabilizing the divisomal assembly under conditions of stress. The protein is Cell division protein FtsP of Pectobacterium atrosepticum (strain SCRI 1043 / ATCC BAA-672) (Erwinia carotovora subsp. atroseptica).